Here is a 297-residue protein sequence, read N- to C-terminus: Large ribosomal subunit protein uL18 (297 aa).

It belongs to the universal ribosomal protein uL18 family. Component of the large ribosomal subunit (LSU).

It is found in the cytoplasm. Its subcellular location is the nucleus. Its function is as follows. Component of the ribosome, a large ribonucleoprotein complex responsible for the synthesis of proteins in the cell. The small ribosomal subunit (SSU) binds messenger RNAs (mRNAs) and translates the encoded message by selecting cognate aminoacyl-transfer RNA (tRNA) molecules. The large subunit (LSU) contains the ribosomal catalytic site termed the peptidyl transferase center (PTC), which catalyzes the formation of peptide bonds, thereby polymerizing the amino acids delivered by tRNAs into a polypeptide chain. The nascent polypeptides leave the ribosome through a tunnel in the LSU and interact with protein factors that function in enzymatic processing, targeting, and the membrane insertion of nascent chains at the exit of the ribosomal tunnel. The chain is Large ribosomal subunit protein uL18 (RpL5) from Lysiphlebus testaceipes (Greenbugs aphid parastoid).